We begin with the raw amino-acid sequence, 127 residues long: Large ribosomal subunit protein bL19 (127 aa).

It belongs to the bacterial ribosomal protein bL19 family.

Its function is as follows. This protein is located at the 30S-50S ribosomal subunit interface and may play a role in the structure and function of the aminoacyl-tRNA binding site. This Jannaschia sp. (strain CCS1) protein is Large ribosomal subunit protein bL19.